A 369-amino-acid chain; its full sequence is Hsc70-interacting protein (369 aa).

Positions 38–97 are disordered; it reads MGGKVPPATQKAKSEENTKEEKPDSKKVEEDLKADEPSSEESDLEIDKEGVIEPDTDAPQ. Basic and acidic residues predominate over residues 49 to 73; that stretch reads AKSEENTKEEKPDSKKVEEDLKADE. TPR repeat units follow at residues 114 to 147, 148 to 181, and 182 to 215; these read ANDK…NPRL, AILY…NPDS, and AQPY…DYDE. Residues 256–272 are compositionally biased toward basic and acidic residues; sequence KAREEHERAQREEEARR. The tract at residues 256-300 is disordered; it reads KAREEHERAQREEEARRQSGAQYGSFPGGFPGGMPGNFPGGMPGM. Gly residues predominate over residues 281–300; that stretch reads FPGGFPGGMPGNFPGGMPGM. The STI1 domain occupies 319-358; sequence DPEVLAAMQDPEVMVAFQDVAQNPANMSKYQSNPKVMNLI. Phosphoserine; by GRK5 is present on Ser346. 2 positions are modified to N6-acetyllysine: Lys353 and Lys360.

Belongs to the FAM10 family. Homotetramer. Interacts with HSC70 as well as DNAJ homologs and HSP90. Interacts (via the C-terminus 303- 319 AA) with GRK5.

Its subcellular location is the cytoplasm. One HIP oligomer binds the ATPase domains of at least two HSC70 molecules dependent on activation of the HSC70 ATPase by HSP40. Stabilizes the ADP state of HSC70 that has a high affinity for substrate protein. Through its own chaperone activity, it may contribute to the interaction of HSC70 with various target proteins. This chain is Hsc70-interacting protein (ST13), found in Homo sapiens (Human).